Here is a 157-residue protein sequence, read N- to C-terminus: Baculoviral IAP repeat-containing protein 5.2-B (157 aa).

A BIR repeat occupies 31–101 (RLRTFSNWPF…KHSPSCLFIA (71 aa)). A Phosphothreonine; by CDK1 modification is found at threonine 47. Residues cysteine 70, cysteine 73, histidine 90, and cysteine 97 each coordinate Zn(2+).

It belongs to the IAP family. As to quaternary structure, component of the CPC at least composed of survivin/birc5, incenp, cdca8/borealin and/or cdca9/dasra-A, and aurkb/aurora-B. Interacts directly with incenp (via N-terminus). Interacts with rxra; the interaction is stronger in the absence of 9-cis retinoic acids. Ubiquitination is required for centrosome-targeting. As to expression, exhibits strong and homogeneous expression in developing oocytes. In embryos, expressed in the animal hemisphere from one-cell to yolk plug stages, and highly expressed in the future brain and dorsal region of the neural tube at the neurula stage and early tail-bud stage. At tadpole stages, expression is restricted at a low level to the head region.

The protein resides in the cytoplasm. Its subcellular location is the nucleus. It localises to the chromosome. It is found in the centromere. The protein localises to the cytoskeleton. The protein resides in the spindle. Does not appear to exhibit anti-apoptotic activity. Plays a role in increasing blood vessel size during development. Component of the chromosomal passenger complex (CPC), a complex that acts as a key regulator of mitosis. The CPC complex has essential functions at the centromere in ensuring correct chromosome alignment and segregation and is required for chromatin-induced microtubule stabilization and spindle assembly. This Xenopus laevis (African clawed frog) protein is Baculoviral IAP repeat-containing protein 5.2-B (birc5.2-b).